The sequence spans 442 residues: Glutamate--methylamine ligase (442 aa).

Positions 13–97 (NQVKYILAQF…IACDGHTHGK (85 aa)) constitute a GS beta-grasp domain. A GS catalytic domain is found at 103–442 (TRVVLKKQLE…WEVNSYLEFF (340 aa)).

It belongs to the glutamine synthetase family. Type 3 subfamily. It depends on Mg(2+) as a cofactor.

It catalyses the reaction methylamine + L-glutamate + ATP = N(5)-methyl-L-glutamine + ADP + phosphate + H(+). Catalyzes the formation of N(5)-methyl-L-glutamine from glutamate and methylamine. This chain is Glutamate--methylamine ligase, found in Methyloversatilis universalis (strain ATCC BAA-1314 / DSM 25237 / JCM 13912 / CCUG 52030 / FAM5).